A 60-amino-acid polypeptide reads, in one-letter code: Cytochrome c oxidase subunit 7, mitochondrial (60 aa).

Over 2 to 29 (ANKVIQLQKIFQSSTKPLWWRHPRSALY) the chain is Mitochondrial matrix. Residues 30–53 (LYPFYAIFAVAVVTPLLYIPNAIR) traverse the membrane as a helical segment. At 54-60 (GIKAKKA) the chain is on the mitochondrial intermembrane side.

Belongs to the cytochrome c oxidase VIIa family. Component of the cytochrome c oxidase (complex IV, CIV), a multisubunit enzyme composed of 12 subunits. The complex is composed of a catalytic core of 3 subunits COX1, COX2 and COX3, encoded in the mitochondrial DNA, and 9 supernumerary subunits COX4, COX5A (or COX5B), COX6, COX7, COX8, COX9, COX12, COX13 and COX26, which are encoded in the nuclear genome. The complex exists as a monomer or a dimer and forms supercomplexes (SCs) in the inner mitochondrial membrane with a dimer of ubiquinol-cytochrome c oxidoreductase (cytochrome b-c1 complex, complex III, CIII), resulting in 2 different assemblies (supercomplexes III(2)IV and III(2)IV(2)).

The protein localises to the mitochondrion inner membrane. The protein operates within energy metabolism; oxidative phosphorylation. Component of the cytochrome c oxidase, the last enzyme in the mitochondrial electron transport chain which drives oxidative phosphorylation. The respiratory chain contains 3 multisubunit complexes succinate dehydrogenase (complex II, CII), ubiquinol-cytochrome c oxidoreductase (cytochrome b-c1 complex, complex III, CIII) and cytochrome c oxidase (complex IV, CIV), that cooperate to transfer electrons derived from NADH and succinate to molecular oxygen, creating an electrochemical gradient over the inner membrane that drives transmembrane transport and the ATP synthase. Cytochrome c oxidase is the component of the respiratory chain that catalyzes the reduction of oxygen to water. Electrons originating from reduced cytochrome c in the intermembrane space (IMS) are transferred via the dinuclear copper A center (CU(A)) of COX2 and heme A of COX1 to the active site in COX1, a binuclear center (BNC) formed by heme A3 and copper B (CU(B)). The BNC reduces molecular oxygen to 2 water molecules using 4 electrons from cytochrome c in the IMS and 4 protons from the mitochondrial matrix. This chain is Cytochrome c oxidase subunit 7, mitochondrial (COX7), found in Saccharomyces cerevisiae (strain ATCC 204508 / S288c) (Baker's yeast).